A 228-amino-acid chain; its full sequence is MRLPILIINFKAYREAAGKRAVELAKAAEKVAKELGVSIAVAPNHLELALVAASVDIPVYAQGVDVEKAGAYTAHVALENLREAGAVGVILNHSEAPLKLNDLAKYVEGGKAMGLDVVVCAPDPLTSLAAAALGPHAVAVEPPELIGTGRAVSKYKPETVVKTVELVSAHFPNVAVITGAGIESGEDVEAALRLGTRGVLLASAAVKAKDPYQKIMELAKPLVAAGPP.

Residue 9–11 coordinates substrate; sequence NFK. Histidine 93 acts as the Electrophile in catalysis. Glutamate 141 (proton acceptor) is an active-site residue. Residues isoleucine 146, glycine 181, and 202-203 contribute to the substrate site; that span reads AS.

It belongs to the triosephosphate isomerase family. In terms of assembly, homotetramer; dimer of dimers.

It is found in the cytoplasm. It carries out the reaction D-glyceraldehyde 3-phosphate = dihydroxyacetone phosphate. The protein operates within carbohydrate biosynthesis; gluconeogenesis. It participates in carbohydrate degradation; glycolysis; D-glyceraldehyde 3-phosphate from glycerone phosphate: step 1/1. Involved in the gluconeogenesis. Catalyzes stereospecifically the conversion of dihydroxyacetone phosphate (DHAP) to D-glyceraldehyde-3-phosphate (G3P). The protein is Triosephosphate isomerase of Pyrobaculum calidifontis (strain DSM 21063 / JCM 11548 / VA1).